The sequence spans 96 residues: MTIRPLHDRVVVKRLEAEEKTASGIVLPGAAAEKPDMGEVIAVGAGKIGKDGARRPLDVKVGDKIIFGKYSGQTVKADGEELLVMREEDIFGIVEK.

It belongs to the GroES chaperonin family. In terms of assembly, heptamer of 7 subunits arranged in a ring. Interacts with the chaperonin GroEL.

It localises to the cytoplasm. In terms of biological role, together with the chaperonin GroEL, plays an essential role in assisting protein folding. The GroEL-GroES system forms a nano-cage that allows encapsulation of the non-native substrate proteins and provides a physical environment optimized to promote and accelerate protein folding. GroES binds to the apical surface of the GroEL ring, thereby capping the opening of the GroEL channel. The chain is Co-chaperonin GroES from Neisseria meningitidis serogroup A / serotype 4A (strain DSM 15465 / Z2491).